The chain runs to 124 residues: Small ribosomal subunit protein uS12 (124 aa).

The interval 1–32 is disordered; the sequence is MPTISQLIRHGRQKQKKRTKSPALKSSPQRRG. A compositionally biased stretch (basic residues) spans 9–20; it reads RHGRQKQKKRTK. The residue at position 89 (aspartate 89) is a 3-methylthioaspartic acid.

This sequence belongs to the universal ribosomal protein uS12 family. In terms of assembly, part of the 30S ribosomal subunit. Contacts proteins S8 and S17. May interact with IF1 in the 30S initiation complex.

Its function is as follows. With S4 and S5 plays an important role in translational accuracy. In terms of biological role, interacts with and stabilizes bases of the 16S rRNA that are involved in tRNA selection in the A site and with the mRNA backbone. Located at the interface of the 30S and 50S subunits, it traverses the body of the 30S subunit contacting proteins on the other side and probably holding the rRNA structure together. The combined cluster of proteins S8, S12 and S17 appears to hold together the shoulder and platform of the 30S subunit. This chain is Small ribosomal subunit protein uS12, found in Leptospira borgpetersenii serovar Hardjo-bovis (strain JB197).